The following is a 1059-amino-acid chain: Protein OPAQUE10 (1059 aa).

A run of 7 repeats spans residues 269–342 (SLLE…KESC), 343–416 (SLLE…KESC), 417–490 (SPLE…KESC), 491–564 (SPLE…KESC), 565–638 (FPLE…KESC), 639–712 (SPLE…KESC), and 713–786 (SPLE…KESC). The segment at 269 to 786 (SLLEPEDSVN…SRPIHDKESC (518 aa)) is 7 X approximate repeats. Positions 511–534 (FNDAPNKESEGYGESGRGKHGEKS) are disordered. Residues 515-534 (PNKESEGYGESGRGKHGEKS) show a composition bias toward basic and acidic residues. 3 disordered regions span residues 732-756 (QYSDGPNEGNEGYGESGHYKHEEKS), 856-875 (ETLADHPKKEEAGLQKDTGT), and 889-998 (SVCS…SGKG). The segment covering 858–869 (LADHPKKEEAGL) has biased composition (basic and acidic residues). 2 stretches are compositionally biased toward polar residues: residues 907-924 (DFSSESHSRLTPTHNTGG) and 945-958 (ASDSTNPELNPEAS). The span at 984-994 (TRGRPEGDAPR) shows a compositional bias: basic and acidic residues. The chain crosses the membrane as a helical span at residues 1003–1023 (VAGGITLVGAVFFMFHLSAAL).

As to quaternary structure, homodimer. Interacts (via N-terminus) with FL1 (via C-terminus), HIP, 19 kDa alpha-zein (AC P06677), 22 kDa alpha-zein (AC O48966), 16 kDa gamma-zein (AC P08031) and 50 kDa gamma-zein (AC C0P381). As to expression, expressed in kernels.

It is found in the endoplasmic reticulum membrane. Functionally, cereal endosperm protein required for the ring-shaped distribution of 22 kDa alpha- and 16 kDa gamma-zeins in protein bodies. The sequence is that of Protein OPAQUE10 from Zea mays (Maize).